The primary structure comprises 233 residues: Large ribosomal subunit protein uL1 (233 aa).

This sequence belongs to the universal ribosomal protein uL1 family. Part of the 50S ribosomal subunit.

Binds directly to 23S rRNA. The L1 stalk is quite mobile in the ribosome, and is involved in E site tRNA release. Its function is as follows. Protein L1 is also a translational repressor protein, it controls the translation of the L11 operon by binding to its mRNA. The sequence is that of Large ribosomal subunit protein uL1 from Pseudoalteromonas atlantica (strain T6c / ATCC BAA-1087).